We begin with the raw amino-acid sequence, 198 residues long: dTTP/UTP pyrophosphatase (198 aa).

Catalysis depends on Asp75, which acts as the Proton acceptor.

It belongs to the Maf family. YhdE subfamily. It depends on a divalent metal cation as a cofactor.

It localises to the cytoplasm. The catalysed reaction is dTTP + H2O = dTMP + diphosphate + H(+). It carries out the reaction UTP + H2O = UMP + diphosphate + H(+). Nucleoside triphosphate pyrophosphatase that hydrolyzes dTTP and UTP. May have a dual role in cell division arrest and in preventing the incorporation of modified nucleotides into cellular nucleic acids. This is dTTP/UTP pyrophosphatase from Wolbachia sp. subsp. Drosophila simulans (strain wRi).